The chain runs to 282 residues: Transcription factor BC1 (282 aa).

The segment at 34–123 (TTAPAIPEDA…ATDSHSLAER (90 aa)) is disordered. Polar residues predominate over residues 45–55 (METSSVVLDTS). Residues 75 to 84 (HSKEAKENGR) are compositionally biased toward basic and acidic residues. Positions 109–116 (ARRGQATD) match the Nuclear localization signal motif. The basic motif; degenerate stretch occupies residues 113–126 (QATDSHSLAERVRR). In terms of domain architecture, bHLH spans 113-163 (QATDSHSLAERVRRERISERMRMLQALVPGCDKVTGKALILDEIINYVQSL). The helix-loop-helix motif stretch occupies residues 127–163 (ERISERMRMLQALVPGCDKVTGKALILDEIINYVQSL). The segment at 219–251 (PAQSHAIMDTSNTSPTPYTLQVQGGSNNNSLSQ) is disordered.

It belongs to the bHLH protein family. As to quaternary structure, homodimer. Component of a nuclear cell elongation controlling complex made of ILI5/BUL1, LO9-177 and BC1. Interacts with ILI5/BUL1 only in the presence of LO9-177. Interacts with IBH1. Binds to LO9-177 in the nucleus. Interacts with BCL1. In terms of tissue distribution, preferentially present in anthers and leaves lamina joints. Expressed in seedlings, leaves sheaths, collars and panicles.

The protein resides in the nucleus. Transcription activator that contributes, together with LO9-177 and ILI5/BUL1, to the promotion of leaf inclination and grain size by modulating cell elongation. Involved in the RLI1-dependent modulation of leaf inclination by promoting lamina joint cell elongation, especially in response to phosphate (Pi) availability. The sequence is that of Transcription factor BC1 from Oryza sativa subsp. japonica (Rice).